A 127-amino-acid chain; its full sequence is Apolipoprotein C-IV (127 aa).

The signal sequence occupies residues 1 to 27 (MSLLRNRLQALPALCLCVLVLACIGAC). An N-linked (GlcNAc...) asparagine glycan is attached at N63.

It belongs to the apolipoprotein C4 family. In terms of tissue distribution, expressed by the liver and secreted in plasma.

It is found in the secreted. May participate in lipoprotein metabolism. This is Apolipoprotein C-IV (APOC4) from Homo sapiens (Human).